The primary structure comprises 115 residues: Parathyroid hormone (115 aa).

The N-terminal stretch at 1–25 (MIPAKDMAKVMIVMLAICFLTKSDG) is a signal peptide. A propeptide spanning residues 26-31 (KSVKKR) is cleaved from the precursor. Residues 51-69 (RVEWLRKKLQDVHNFVALG) form an important for receptor binding region. A disordered region spans residues 73-115 (APRDAGSQRPRKKEDNVLVESHEKSLGEADKADVNVLTKAKSQ). Basic and acidic residues predominate over residues 84–105 (KKEDNVLVESHEKSLGEADKAD).

This sequence belongs to the parathyroid hormone family. Interacts with PTH1R (via N-terminal extracellular domain).

Its subcellular location is the secreted. Its function is as follows. Parathyroid hormone elevates calcium level by dissolving the salts in bone and preventing their renal excretion. Acts by binding to its receptor, PTH1R, activating G protein-coupled receptor signaling. Stimulates [1-14C]-2-deoxy-D-glucose (2DG) transport and glycogen synthesis in osteoblastic cells. In Homo sapiens (Human), this protein is Parathyroid hormone.